Here is a 157-residue protein sequence, read N- to C-terminus: 17.6 kDa class I heat shock protein 3 (157 aa).

In terms of domain architecture, sHSP spans 43-157; the sequence is DVAAFTNAKV…PEVKSIDISG (115 aa).

Belongs to the small heat shock protein (HSP20) family. May form oligomeric structures.

The protein localises to the cytoplasm. The chain is 17.6 kDa class I heat shock protein 3 (HSP17.6C) from Arabidopsis thaliana (Mouse-ear cress).